The sequence spans 416 residues: MDSSTPQNYLAVIKVVGIGGGGVNAVNRMIEEGLRGVEFIAINTDAQALLMSDADVKLDVGRELTRGLGAGANPDVGRQAAEDHEEEIQEVLKGADMVFVTAGEGGGTGTGGAPVVARIARSLGALTIGVVTRPFTFEGRRRSNQAENGIETLRDEVDTLIVIPNDRLLSISDRNVSMLDAFKSADQVLLSGVSGITDLITTPGLINLDFADVKSVMQGAGSALMGIGSAQGEDRAVKAAELAIASPLLEASIDGAHGVLLSIQGGSDLGLFEINEAARLVQEVAHPEANIIFGAVIDDALGDQARVTVIAAGFDSVSQETNANNSSPAQRQAESTRAAFGGDASRPSGLGRSPQRGGNSYGAPAAGFGSRQGQGQDDDIPDDAGFDVDLPAEADAPSSSNTSARKDSLDFPDFLK.

GTP is bound by residues 20–24 (GGGVN), 107–109 (GTG), Glu138, Arg142, and Asp186. Polar residues predominate over residues 319-335 (QETNANNSSPAQRQAES). The tract at residues 319-416 (QETNANNSSP…DSLDFPDFLK (98 aa)) is disordered. Residues 376–392 (QDDDIPDDAGFDVDLPA) are compositionally biased toward acidic residues. The segment covering 404–416 (ARKDSLDFPDFLK) has biased composition (basic and acidic residues).

The protein belongs to the FtsZ family. In terms of assembly, homodimer. Polymerizes to form a dynamic ring structure in a strictly GTP-dependent manner. Interacts directly with several other division proteins.

The protein localises to the cytoplasm. In terms of biological role, essential cell division protein that forms a contractile ring structure (Z ring) at the future cell division site. The regulation of the ring assembly controls the timing and the location of cell division. One of the functions of the FtsZ ring is to recruit other cell division proteins to the septum to produce a new cell wall between the dividing cells. Binds GTP and shows GTPase activity. The chain is Cell division protein FtsZ from Kocuria rhizophila (strain ATCC 9341 / DSM 348 / NBRC 103217 / DC2201).